The chain runs to 883 residues: DNA mismatch repair protein MutS (883 aa).

633 to 640 provides a ligand contact to ATP; that stretch reads GPNMGGKS.

Belongs to the DNA mismatch repair MutS family.

Functionally, this protein is involved in the repair of mismatches in DNA. It is possible that it carries out the mismatch recognition step. This protein has a weak ATPase activity. The polypeptide is DNA mismatch repair protein MutS (Bordetella parapertussis (strain 12822 / ATCC BAA-587 / NCTC 13253)).